Consider the following 191-residue polypeptide: Protein GrpE (191 aa).

This sequence belongs to the GrpE family. Homodimer.

The protein resides in the cytoplasm. Its function is as follows. Participates actively in the response to hyperosmotic and heat shock by preventing the aggregation of stress-denatured proteins, in association with DnaK and GrpE. It is the nucleotide exchange factor for DnaK and may function as a thermosensor. Unfolded proteins bind initially to DnaJ; upon interaction with the DnaJ-bound protein, DnaK hydrolyzes its bound ATP, resulting in the formation of a stable complex. GrpE releases ADP from DnaK; ATP binding to DnaK triggers the release of the substrate protein, thus completing the reaction cycle. Several rounds of ATP-dependent interactions between DnaJ, DnaK and GrpE are required for fully efficient folding. The polypeptide is Protein GrpE (Listeria monocytogenes serotype 4a (strain HCC23)).